A 217-amino-acid chain; its full sequence is Large ribosomal subunit protein eL14 (217 aa).

Lys79 bears the N6-acetyllysine mark. Position 85 is an N6-acetyllysine; alternate (Lys85). Lys85 carries the post-translational modification N6-succinyllysine; alternate. Lys124 is covalently cross-linked (Glycyl lysine isopeptide (Lys-Gly) (interchain with G-Cter in SUMO2)). Ser139 is modified (phosphoserine). The disordered stretch occupies residues 162–217; it reads KVPAKKATGPGKKAAGQKAPAQKAAGQKAAPPAKGQKGQKTPAQKAPAPKAAGKKA. The 1-1; approximate repeat unit spans residues 173–177; it reads KKAAG. The interval 173–192 is 4 X 5 AA tandem repeats of Q-K-A-[APS]-X; it reads KKAAGQKAPAQKAAGQKAAP. Tandem repeats lie at residues 178–182, 183–187, 188–192, 195–197, and 198–200. A 2 X 3 AA tandem repeats of K-G-Q region spans residues 195 to 200; sequence KGQKGQ. Lys206 is modified (N6-succinyllysine).

Belongs to the eukaryotic ribosomal protein eL14 family. In terms of assembly, component of the large ribosomal subunit.

The protein localises to the cytoplasm. In terms of biological role, component of the large ribosomal subunit. The ribosome is a large ribonucleoprotein complex responsible for the synthesis of proteins in the cell. The sequence is that of Large ribosomal subunit protein eL14 (Rpl14) from Mus musculus (Mouse).